A 153-amino-acid chain; its full sequence is Urease accessory protein UreE (153 aa).

The protein belongs to the UreE family.

The protein resides in the cytoplasm. Its function is as follows. Involved in urease metallocenter assembly. Binds nickel. Probably functions as a nickel donor during metallocenter assembly. In Acetivibrio thermocellus (strain ATCC 27405 / DSM 1237 / JCM 9322 / NBRC 103400 / NCIMB 10682 / NRRL B-4536 / VPI 7372) (Clostridium thermocellum), this protein is Urease accessory protein UreE.